The sequence spans 471 residues: Cysteine--tRNA ligase (471 aa).

Cysteine 29 provides a ligand contact to Zn(2+). The 'HIGH' region motif lies at 31-41 (LTVQSEPHVGH). The Zn(2+) site is built by cysteine 215, histidine 240, and glutamate 244. The 'KMSKS' region signature appears at 271 to 275 (KMSKS). Lysine 274 is an ATP binding site.

It belongs to the class-I aminoacyl-tRNA synthetase family. In terms of assembly, monomer. It depends on Zn(2+) as a cofactor.

It is found in the cytoplasm. The catalysed reaction is tRNA(Cys) + L-cysteine + ATP = L-cysteinyl-tRNA(Cys) + AMP + diphosphate. In Nocardioides sp. (strain ATCC BAA-499 / JS614), this protein is Cysteine--tRNA ligase.